The following is a 1393-amino-acid chain: DNA glycosylase/AP lyase ROS1 (1393 aa).

Disordered regions lie at residues 1–25 (MEKQ…MKPF), 98–186 (SLSS…TSTR), and 237–265 (LSAP…SNLE). A compositionally biased stretch (low complexity) spans 98 to 108 (SLSSVSNNVAE). The span at 117–126 (PKRKKHRPKV) shows a compositional bias: basic residues. 2 stretches are compositionally biased toward basic and acidic residues: residues 127–138 (RREAKPKREPKP) and 162–171 (KKVEVSKDQD). Over residues 243–256 (PKRKRSQGKRKGVQ) the composition is skewed to basic residues. The DEMETER stretch occupies residues 528–626 (KVDLDDETDR…AFMSLASQFP (99 aa)). A compositionally biased stretch (polar residues) spans 653–672 (EETMSSPPDHNHSSVTLKNT). Disordered stretches follow at residues 653 to 722 (EETM…SVEV) and 789 to 830 (SNQV…CSQQ). The segment covering 687–698 (SRSSSEIAISAH) has biased composition (low complexity). Residues 699–722 (ESVDKTTDSKEYVDSDRKGSSVEV) are compositionally biased toward basic and acidic residues. A compositionally biased stretch (polar residues) spans 816 to 830 (KSSVDSSEPGCCSQQ). A Glycyl lysine isopeptide (Lys-Gly) (interchain with G-Cter in ubiquitin) cross-link involves residue K901. C1038, C1045, C1048, and C1054 together coordinate [4Fe-4S] cluster.

Belongs to the DNA glycosylase family. DEMETER subfamily. As to quaternary structure, interacts (via the central region) with ZDP. Binds to RPA2A. Interacts with XRCC1. Interacts probably with a complex made of MBD7, IDM1, IDM2 and IDM3. Interacts with APE1L. The cofactor is [4Fe-4S] cluster. As to expression, expressed ubiquitously in both vegetative and reproductive organs.

Its subcellular location is the nucleus. The protein localises to the nucleolus. It carries out the reaction 2'-deoxyribonucleotide-(2'-deoxyribose 5'-phosphate)-2'-deoxyribonucleotide-DNA = a 3'-end 2'-deoxyribonucleotide-(2,3-dehydro-2,3-deoxyribose 5'-phosphate)-DNA + a 5'-end 5'-phospho-2'-deoxyribonucleoside-DNA + H(+). Its activity is regulated as follows. Stimulated by ZDP. Stimulated by XRCC1. In terms of biological role, bifunctional DNA glycosylase/lyase, which excises 5-methylcytosine (5-meC) and 5-hydroxymethylcytosine (5-hmeC), leaving an apyrimidinic (AP) site that is subsequently incised by the lyase activity. Generates 3'-phosphor-alpha,beta-unsaturated aldehyde (3'-PUA) as a primary 5-meC excision intermediate. Prevents DNA hypermethylation, specifically in the promoter of otherwise silenced loci. May be involved in DNA repair through its nicking activity on methylated DNA. Binds with similar affinity to both methylated and non-methylated DNA. Highly distributive behavior on DNA substrates containing multiple 5-meC residues. Involved with Pol IV in the remodeling of the 5S rDNA chromatin via DNA methylation modifications during the first days of development post-germination. Participates in UV-B induced- and oxidative DNA damage repair. In Arabidopsis thaliana (Mouse-ear cress), this protein is DNA glycosylase/AP lyase ROS1.